A 321-amino-acid chain; its full sequence is MRNTFLEFEQPLAELENKIEQLRYVQADSAVDISDEIGRLQQKSQNLAKEIYGKLTPWQTALVARHPQRPYTLDYVREIFTDFHELHGDRMYADDQSIVGGLARFNGSACMVIGHQKGRDTKERAARNFGMPRPEGYRKALRLMRLAEKFRLPIFTFIDTPGAYPGIGAEERGQSEAIGRNLYAMAELKVPVICTVIGEGGSGGALAIAVGNAVLMLQYATYSVISPEGCASILWRSADKAPEAAEALAITAPRLKDLGLVDRVVNEPVGGAHRDPRVMARLLRRALGDALRQLQGLGPEQLVDQRLQRLMSYGRFQEVRA.

A CoA carboxyltransferase C-terminal domain is found at 39 to 293 (RLQQKSQNLA…RRALGDALRQ (255 aa)).

This sequence belongs to the AccA family. In terms of assembly, acetyl-CoA carboxylase is a heterohexamer composed of biotin carboxyl carrier protein (AccB), biotin carboxylase (AccC) and two subunits each of ACCase subunit alpha (AccA) and ACCase subunit beta (AccD).

The protein resides in the cytoplasm. The enzyme catalyses N(6)-carboxybiotinyl-L-lysyl-[protein] + acetyl-CoA = N(6)-biotinyl-L-lysyl-[protein] + malonyl-CoA. The protein operates within lipid metabolism; malonyl-CoA biosynthesis; malonyl-CoA from acetyl-CoA: step 1/1. Its function is as follows. Component of the acetyl coenzyme A carboxylase (ACC) complex. First, biotin carboxylase catalyzes the carboxylation of biotin on its carrier protein (BCCP) and then the CO(2) group is transferred by the carboxyltransferase to acetyl-CoA to form malonyl-CoA. The sequence is that of Acetyl-coenzyme A carboxylase carboxyl transferase subunit alpha from Bordetella bronchiseptica (strain ATCC BAA-588 / NCTC 13252 / RB50) (Alcaligenes bronchisepticus).